The following is an 89-amino-acid chain: Defensin-like protein 103 (89 aa).

An N-terminal signal peptide occupies residues Met-1–Cys-24. Cystine bridges form between Cys-46–Cys-84, Cys-52–Cys-75, Cys-61–Cys-82, and Cys-65–Cys-83.

The protein belongs to the DEFL family.

Its subcellular location is the secreted. This chain is Defensin-like protein 103, found in Arabidopsis thaliana (Mouse-ear cress).